The primary structure comprises 512 residues: Alpha-amylase 1 (512 aa).

The signal sequence occupies residues 1–25; it reads MRFSTEGFTSKVVAAILAFSRLVSA. An intrachain disulfide couples cysteine 66 to cysteine 74. Tryptophan 119 is a binding site for substrate. Position 157 (asparagine 157) interacts with Ca(2+). Residue histidine 158 participates in substrate binding. A disulfide bond links cysteine 186 and cysteine 200. The Ca(2+) site is built by glutamate 198 and aspartate 211. Asparagine 233 carries an N-linked (GlcNAc...) asparagine glycan. Substrate is bound at residue arginine 240. Residues aspartate 242, histidine 246, and glutamate 266 each coordinate Ca(2+). Catalysis depends on aspartate 242, which acts as the Nucleophile. Residue 245-246 coordinates substrate; the sequence is KH. Catalysis depends on glutamate 266, which acts as the Proton donor. Residue glycine 270 coordinates substrate. A disulfide bond links cysteine 276 and cysteine 319. The substrate site is built by aspartate 333 and arginine 380. The cysteines at positions 475 and 510 are disulfide-linked.

This sequence belongs to the glycosyl hydrolase 13 family. Ca(2+) is required as a cofactor.

Its subcellular location is the secreted. It catalyses the reaction Endohydrolysis of (1-&gt;4)-alpha-D-glucosidic linkages in polysaccharides containing three or more (1-&gt;4)-alpha-linked D-glucose units.. With respect to regulation, alpha-amylase expression underlies catabolite repression by glucose. In Schwanniomyces occidentalis (Yeast), this protein is Alpha-amylase 1 (AMY1).